Consider the following 1689-residue polypeptide: Cullin-7 (1689 aa).

A CPH domain is found at 349–422 (RASFASFNTY…HWHMLEILGF (74 aa)). Residues 793–972 (PIQIPFFDVF…HTRLFYMVRA (180 aa)) form the DOC domain. Residues 1321–1337 (VAHEDSGREDKSKKEEA) show a composition bias toward basic and acidic residues. The segment at 1321 to 1371 (VAHEDSGREDKSKKEEAIGEAAAVAMAEEEDQGKKEEGEEEGEGEDEEEER) is disordered. Acidic residues predominate over residues 1358–1370 (GEEEGEGEDEEEE). A Glycyl lysine isopeptide (Lys-Gly) (interchain with G-Cter in NEDD8) cross-link involves residue K1567.

The protein belongs to the cullin family. As to quaternary structure, component of the 3M complex, composed of core components CUL7, CCDC8 and OBSL1. Component of the Cul7-RING(FBXW8) complex consisting of CUL7, RBX1, SKP1 and FBXW8. Within the Cul7-RING(FBXW8) complex interacts with FBXW8 and RBX1, but not with SKP1. Interacts with CUL1 (via the C-terminal domain); the interaction seems to be mediated by FBXW8; it is likely specific to FBXW8, but not other F-box proteins. Interacts (via the CPH domain) with p53/TP53; the interaction preferentially involves tetrameric and dimeric p53/TP53; this interaction recruits p53/TP53 for ubiquitination by neddylated CUL1-RBX1. The CUL7-CUL9 heterodimer seems to interact specifically with p53/TP53. Interacts with FBXW8; interaction is mutually exclusive of binding to CUL9 or p53/TP53. Interacts with CUL9; leading to inhibited CUL9 activity. Interacts with OBSL1. Interacts (as part of the 3M complex) with HDAC4 and HDAC5; it is negatively regulated by ANKRA2.

The protein resides in the cytoplasm. Its subcellular location is the cytoskeleton. It localises to the microtubule organizing center. It is found in the centrosome. The protein localises to the perinuclear region. The protein resides in the golgi apparatus. Its pathway is protein modification; protein ubiquitination. Functionally, core component of the 3M and Cul7-RING(FBXW8) complexes, which mediate the ubiquitination and subsequent proteasomal degradation of target proteins. Core component of the 3M complex, a complex required to regulate microtubule dynamics and genome integrity. It is unclear how the 3M complex regulates microtubules, it could act by controlling the level of a microtubule stabilizer. The Cul7-RING(FBXW8) complex alone lacks ubiquitination activity and does not promote polyubiquitination and proteasomal degradation of p53/TP53. However it mediates recruitment of p53/TP53 for ubiquitination by neddylated CUL1-RBX1. Interaction with CUL9 is required to inhibit CUL9 activity and ubiquitination of BIRC5. The Cul7-RING(FBXW8) complex also mediates ubiquitination and consequent degradation of target proteins such as GORASP1, IRS1 and MAP4K1/HPK1. Ubiquitination of GORASP1 regulates Golgi morphogenesis and dendrite patterning in brain. Mediates ubiquitination and degradation of IRS1 in a mTOR-dependent manner: the Cul7-RING(FBXW8) complex recognizes and binds IRS1 previously phosphorylated by S6 kinase (RPS6KB1 or RPS6KB2). The Cul7-RING(FBXW8) complex also mediates ubiquitination of MAP4K1/HPK1: recognizes and binds autophosphorylated MAP4K1/HPK1, leading to its degradation, thereby affecting cell proliferation and differentiation. Acts as a regulator in trophoblast cell epithelial-mesenchymal transition and placental development. While the Cul7-RING(FBXW8) and the 3M complexes are associated and involved in common processes, CUL7 and the Cul7-RING(FBXW8) complex may have additional functions. Probably plays a role in the degradation of proteins involved in endothelial proliferation and/or differentiation. The sequence is that of Cullin-7 (Cul7) from Mus musculus (Mouse).